Reading from the N-terminus, the 80-residue chain is Defensin-like protein 207 (80 aa).

The first 29 residues, 1 to 29 (MAKNLNSVSFIVLLLVLLVASTEILKSDA), serve as a signal peptide directing secretion. Cystine bridges form between Cys38-Cys64, Cys50-Cys75, and Cys54-Cys77.

This sequence belongs to the DEFL family.

It localises to the secreted. This is Defensin-like protein 207 from Arabidopsis thaliana (Mouse-ear cress).